The chain runs to 593 residues: uncharacterized protein (593 aa).

The next 12 helical transmembrane spans lie at 21-41 (PAVF…SVVY), 60-80 (VGWW…YCGI), 97-117 (FSFW…GLVF), 148-168 (MALT…VVGL), 204-224 (VDVI…GFGI), 243-263 (WMVG…VSGV), 275-295 (MALA…LFLL), 328-348 (WTIF…MFIA), 359-379 (FIGA…TIFG), 410-430 (GLPI…FFFV), 457-477 (VYWA…GGAG), and 485-505 (AAIA…YAMT).

The protein belongs to the BCCT transporter (TC 2.A.15) family.

The protein resides in the cell membrane. This is an uncharacterized protein from Mycobacterium tuberculosis (strain CDC 1551 / Oshkosh).